Consider the following 117-residue polypeptide: Large ribosomal subunit protein eL34 (117 aa).

Phosphoserine is present on serine 12. N6-acetyllysine is present on residues lysine 36 and lysine 43. Lysine 108 participates in a covalent cross-link: Glycyl lysine isopeptide (Lys-Gly) (interchain with G-Cter in SUMO2).

This sequence belongs to the eukaryotic ribosomal protein eL34 family. As to quaternary structure, component of the large ribosomal subunit.

The protein localises to the cytoplasm. Its subcellular location is the cytosol. It localises to the endoplasmic reticulum. In terms of biological role, component of the large ribosomal subunit. The ribosome is a large ribonucleoprotein complex responsible for the synthesis of proteins in the cell. This Rattus norvegicus (Rat) protein is Large ribosomal subunit protein eL34 (Rpl34).